A 423-amino-acid chain; its full sequence is MDNHNSSHQLYKKAMALVLAGGRGSRLYNLTDTRAKPAVYFGGKFRIIDFALSNCLNSGIRRIGVVTQYKSHSLLRHLQRGWGFLRGELNEFIDLLPAQQRVDEEHWYRGTADAVYQNIDILRSYGPEYVIVLAGDHIYKMDYSIMLRDHAQSGYKCTVGCVEIAKEEAYAFGIMGIDENRKITSFIEKPKKNAPTIPGTTDRCYASMGIYIFNSDYLYDLLEEDITNKESSHDFGKDIIPRVVSENQALAHPFSMSCVPRGEGIEPYWRDVGTIDAFWEANLDLAANMPELNIYDKDWPVWTAQEQLPPAKFVPDRNGNHGVITNTLASGGCIVLGSEISKSLMFSKVRVLAGCKIDQCVIMPEVVVGENCRLKKVVIDKGCDIPAGMVIGEDPIEDAKNFYRTDKGVVLVTKKMIDELKEK.

Alpha-D-glucose 1-phosphate is bound by residues tyrosine 108, glycine 173, 188–189 (EK), and serine 207.

The protein belongs to the bacterial/plant glucose-1-phosphate adenylyltransferase family. Homotetramer.

The catalysed reaction is alpha-D-glucose 1-phosphate + ATP + H(+) = ADP-alpha-D-glucose + diphosphate. Its pathway is glycan biosynthesis; glycogen biosynthesis. In terms of biological role, involved in the biosynthesis of ADP-glucose, a building block required for the elongation reactions to produce glycogen. Catalyzes the reaction between ATP and alpha-D-glucose 1-phosphate (G1P) to produce pyrophosphate and ADP-Glc. The chain is Glucose-1-phosphate adenylyltransferase from Francisella tularensis subsp. holarctica (strain FTNF002-00 / FTA).